Reading from the N-terminus, the 760-residue chain is Probable myosin-binding protein 4 (760 aa).

A helical membrane pass occupies residues 26–46; that stretch reads WFLILLMFIDALLSYLLVWFA. Disordered stretches follow at residues 161–189, 247–273, 292–311, and 348–595; these read SRGR…SLKK, SEKR…QPVL, SMLG…VKAK, and EAEV…KHSA. Positions 352 to 366 are enriched in low complexity; the sequence is SGSSSPSGGEFLSPS. The span at 371–383 shows a compositional bias: basic and acidic residues; that stretch reads ASREIRIQEHDDS. A compositionally biased stretch (polar residues) spans 385–394; it reads DFSQNITSSA. Residues 388–416 are a coiled coil; it reads QNITSSAMEIEEFEAAIEQKESDHMDVSG. Residues 404–413 show a composition bias toward basic and acidic residues; sequence IEQKESDHMD. Acidic residues-rich tracts occupy residues 446-458 and 517-526; these read LEQE…ESEV and EEDVDNEESE. Composition is skewed to basic and acidic residues over residues 537 to 550 and 562 to 580; these read VKEE…HGDH and SKEE…KITE. The 99-residue stretch at 611–709 folds into the GTD-binding domain; it reads SLVEVLKQQL…DLEMELEYYR (99 aa). Residues 725–760 are disordered; that stretch reads GILGNTEETNVTSPTDETSIKDSTDTKLTGSPSAEN. 2 stretches are compositionally biased toward polar residues: residues 730 to 741 and 750 to 760; these read TEETNVTSPTDE and TKLTGSPSAEN.

Its subcellular location is the endomembrane system. Its function is as follows. Membrane-anchored myosin receptors that define a distinct, plant-specific transport vesicle compartment. This chain is Probable myosin-binding protein 4, found in Arabidopsis thaliana (Mouse-ear cress).